A 509-amino-acid chain; its full sequence is 2,3-bisphosphoglycerate-independent phosphoglycerate mutase (509 aa).

D11 provides a ligand contact to Mn(2+). The residue at position 35 (Y35) is a Phosphotyrosine. Mn(2+) is bound at residue S61. S61 (phosphoserine intermediate) is an active-site residue. Substrate is bound by residues H122, 152–153, R184, R190, 260–263, and K335; these read RD and RPDR. Residues D402, H406, D443, H444, and H461 each coordinate Mn(2+).

It belongs to the BPG-independent phosphoglycerate mutase family. As to quaternary structure, monomer. The cofactor is Mn(2+).

It carries out the reaction (2R)-2-phosphoglycerate = (2R)-3-phosphoglycerate. The protein operates within carbohydrate degradation; glycolysis; pyruvate from D-glyceraldehyde 3-phosphate: step 3/5. Functionally, essential for rapid growth and for sporulation. Catalyzes the interconversion of 2-phosphoglycerate and 3-phosphoglycerate. This chain is 2,3-bisphosphoglycerate-independent phosphoglycerate mutase, found in Bacillus cereus (strain ATCC 14579 / DSM 31 / CCUG 7414 / JCM 2152 / NBRC 15305 / NCIMB 9373 / NCTC 2599 / NRRL B-3711).